Reading from the N-terminus, the 872-residue chain is DNA mismatch repair protein MutS (872 aa).

602–609 is a binding site for ATP; the sequence is GPNMSGKS.

This sequence belongs to the DNA mismatch repair MutS family.

This protein is involved in the repair of mismatches in DNA. It is possible that it carries out the mismatch recognition step. This protein has a weak ATPase activity. The polypeptide is DNA mismatch repair protein MutS (Staphylococcus aureus (strain bovine RF122 / ET3-1)).